We begin with the raw amino-acid sequence, 298 residues long: Tyrosine recombinase XerD (298 aa).

The 86-residue stretch at 3-88 (TLEHPLIDRF…GLRGFYRYCL (86 aa)) folds into the Core-binding (CB) domain. The Tyr recombinase domain maps to 109–292 (PLPKSLSEAD…ARARLQDLHA (184 aa)). Active-site residues include Arg-149, Lys-173, His-244, Arg-247, and His-270. Tyr-279 acts as the O-(3'-phospho-DNA)-tyrosine intermediate in catalysis.

This sequence belongs to the 'phage' integrase family. XerD subfamily. Forms a cyclic heterotetrameric complex composed of two molecules of XerC and two molecules of XerD.

It is found in the cytoplasm. Its function is as follows. Site-specific tyrosine recombinase, which acts by catalyzing the cutting and rejoining of the recombining DNA molecules. The XerC-XerD complex is essential to convert dimers of the bacterial chromosome into monomers to permit their segregation at cell division. It also contributes to the segregational stability of plasmids. The polypeptide is Tyrosine recombinase XerD (Pseudomonas aeruginosa (strain ATCC 15692 / DSM 22644 / CIP 104116 / JCM 14847 / LMG 12228 / 1C / PRS 101 / PAO1)).